The sequence spans 281 residues: Bifunctional protein FolD (281 aa).

Residues G165–G167, T192, and V233 each bind NADP(+).

It belongs to the tetrahydrofolate dehydrogenase/cyclohydrolase family. As to quaternary structure, homodimer.

The enzyme catalyses (6R)-5,10-methylene-5,6,7,8-tetrahydrofolate + NADP(+) = (6R)-5,10-methenyltetrahydrofolate + NADPH. The catalysed reaction is (6R)-5,10-methenyltetrahydrofolate + H2O = (6R)-10-formyltetrahydrofolate + H(+). It functions in the pathway one-carbon metabolism; tetrahydrofolate interconversion. Its function is as follows. Catalyzes the oxidation of 5,10-methylenetetrahydrofolate to 5,10-methenyltetrahydrofolate and then the hydrolysis of 5,10-methenyltetrahydrofolate to 10-formyltetrahydrofolate. This is Bifunctional protein FolD from Corynebacterium diphtheriae (strain ATCC 700971 / NCTC 13129 / Biotype gravis).